The following is a 211-amino-acid chain: Large ribosomal subunit protein eL13 (211 aa).

The protein belongs to the eukaryotic ribosomal protein eL13 family. As to quaternary structure, component of the 60S large ribosomal subunit (LSU).

It localises to the cytoplasm. Its function is as follows. Component of the ribosome, a large ribonucleoprotein complex responsible for the synthesis of proteins in the cell. The small ribosomal subunit (SSU) binds messenger RNAs (mRNAs) and translates the encoded message by selecting cognate aminoacyl-transfer RNA (tRNA) molecules. The large subunit (LSU) contains the ribosomal catalytic site termed the peptidyl transferase center (PTC), which catalyzes the formation of peptide bonds, thereby polymerizing the amino acids delivered by tRNAs into a polypeptide chain. The nascent polypeptides leave the ribosome through a tunnel in the LSU and interact with protein factors that function in enzymatic processing, targeting, and the membrane insertion of nascent chains at the exit of the ribosomal tunnel. As part of the LSU, it is probably required for its formation and the maturation of rRNAs. This Danio rerio (Zebrafish) protein is Large ribosomal subunit protein eL13 (rpl13).